Consider the following 124-residue polypeptide: Large ribosomal subunit protein bL12 (124 aa).

Belongs to the bacterial ribosomal protein bL12 family. As to quaternary structure, homodimer. Part of the ribosomal stalk of the 50S ribosomal subunit. Forms a multimeric L10(L12)X complex, where L10 forms an elongated spine to which 2 to 4 L12 dimers bind in a sequential fashion. Binds GTP-bound translation factors.

In terms of biological role, forms part of the ribosomal stalk which helps the ribosome interact with GTP-bound translation factors. Is thus essential for accurate translation. This chain is Large ribosomal subunit protein bL12, found in Bacteroides thetaiotaomicron (strain ATCC 29148 / DSM 2079 / JCM 5827 / CCUG 10774 / NCTC 10582 / VPI-5482 / E50).